Reading from the N-terminus, the 493-residue chain is 3-octaprenyl-4-hydroxybenzoate carboxy-lyase (493 aa).

Position 172 (asparagine 172) interacts with Mn(2+). Residues 175–177 (IYR), 189–191 (RWL), and 194–195 (RG) contribute to the prenylated FMN site. Residue glutamate 238 participates in Mn(2+) binding. Aspartate 287 (proton donor) is an active-site residue.

This sequence belongs to the UbiD family. Homohexamer. Prenylated FMN serves as cofactor. The cofactor is Mn(2+).

Its subcellular location is the cell membrane. The catalysed reaction is a 4-hydroxy-3-(all-trans-polyprenyl)benzoate + H(+) = a 2-(all-trans-polyprenyl)phenol + CO2. The protein operates within cofactor biosynthesis; ubiquinone biosynthesis. In terms of biological role, catalyzes the decarboxylation of 3-octaprenyl-4-hydroxy benzoate to 2-octaprenylphenol, an intermediate step in ubiquinone biosynthesis. The polypeptide is 3-octaprenyl-4-hydroxybenzoate carboxy-lyase (Shewanella sediminis (strain HAW-EB3)).